A 473-amino-acid chain; its full sequence is Cysteine--tRNA ligase (473 aa).

Zn(2+) is bound at residue Cys-29. The 'HIGH' region signature appears at 31–41 (ATVQSAPHIGH). Zn(2+) contacts are provided by Cys-207, His-232, and Glu-236. The 'KMSKS' region signature appears at 263–267 (KMSKS). Lys-266 is an ATP binding site.

Belongs to the class-I aminoacyl-tRNA synthetase family. In terms of assembly, monomer. Zn(2+) serves as cofactor.

The protein localises to the cytoplasm. The catalysed reaction is tRNA(Cys) + L-cysteine + ATP = L-cysteinyl-tRNA(Cys) + AMP + diphosphate. The protein is Cysteine--tRNA ligase of Corynebacterium kroppenstedtii (strain DSM 44385 / JCM 11950 / CIP 105744 / CCUG 35717).